Here is a 49-residue protein sequence, read N- to C-terminus: Large ribosomal subunit protein bL33B (49 aa).

Belongs to the bacterial ribosomal protein bL33 family.

Its function is as follows. Plays a role in sporulation at high temperatures. This is Large ribosomal subunit protein bL33B (rpmGB) from Bacillus subtilis (strain 168).